We begin with the raw amino-acid sequence, 59 residues long: Chromatin protein Cren7 (59 aa).

The protein belongs to the Cren7 family. Monomer. Methylated at multiple sites, to varying extents.

The protein localises to the chromosome. The protein resides in the cytoplasm. Functionally, a chromatin protein, binds double-stranded DNA without sequence specificity. Constrains negative DNA supercoils. The protein is Chromatin protein Cren7 of Pyrobaculum arsenaticum (strain DSM 13514 / JCM 11321 / PZ6).